The sequence spans 156 residues: Small ribosomal subunit protein uS7 (156 aa).

The protein belongs to the universal ribosomal protein uS7 family. As to quaternary structure, part of the 30S ribosomal subunit. Contacts proteins S9 and S11.

Its function is as follows. One of the primary rRNA binding proteins, it binds directly to 16S rRNA where it nucleates assembly of the head domain of the 30S subunit. Is located at the subunit interface close to the decoding center, probably blocks exit of the E-site tRNA. This chain is Small ribosomal subunit protein uS7, found in Symbiobacterium thermophilum (strain DSM 24528 / JCM 14929 / IAM 14863 / T).